Here is a 212-residue protein sequence, read N- to C-terminus: MPADPSEEVAPQVPKTELEELQINAQGVADESLESTRRMLALCEESKEAGIRTLVALDDQGEQLDRIEEGMDQINADMREAEKNLSGMEKCCGICVLPCNKSQSFKEDDGTWKGNDDGKVVNNQPQRVMDDRNGMMAQAGYIGRITNDAREDEMEENMGQVNTMIGNLRNMALDMGSELENQNRQIDRINRKGESNEARIAVANQRAHQLLK.

T-SNARE coiled-coil homology domains lie at 26–88 (QGVA…LSGM) and 148–210 (DARE…AHQL).

This sequence belongs to the SNAP-25 family. Exclusively found in brain and ganglia.

It is found in the synapse. Its subcellular location is the synaptosome. May play an important role in the synaptic function of specific neuronal systems. Associates with proteins involved in vesicle docking and membrane fusion. This chain is Synaptosomal-associated protein 25 (Snap25), found in Drosophila melanogaster (Fruit fly).